Here is a 107-residue protein sequence, read N- to C-terminus: Prostate collagen triple helix protein (107 aa).

A disordered region spans residues 47 to 107 (PLIPRTPGSP…PTSPLFPFCP (61 aa)). The span at 81–100 (VGPKGPMLPLGPSGPVGPTS) shows a compositional bias: low complexity.

Expressed in prostate and testis. Weakly or not expressed in other tissues. Overexpressed in prostate cancers.

The protein resides in the cytoplasm. Its function is as follows. May be involved in growth and survival of prostate cancer cells through the TAF-Ibeta pathway. The polypeptide is Prostate collagen triple helix protein (PCOTH) (Homo sapiens (Human)).